The sequence spans 269 residues: Putative ABC transporter ATP-binding protein PF0528 (269 aa).

The ABC transporter domain maps to 6-237 (IVVENLYSSY…EILKRNNLDV (232 aa)). 39–46 (GPNGAGKS) serves as a coordination point for ATP.

This sequence belongs to the ABC transporter superfamily.

It localises to the cell membrane. In terms of biological role, probably part of an ABC transporter complex. Responsible for energy coupling to the transport system. This Pyrococcus furiosus (strain ATCC 43587 / DSM 3638 / JCM 8422 / Vc1) protein is Putative ABC transporter ATP-binding protein PF0528.